Consider the following 213-residue polypeptide: Golgi SNAP receptor complex member 2 homolog memb-1 (213 aa).

The Cytoplasmic portion of the chain corresponds to 1 to 189; sequence MEALYQSTNF…QVIDRRVRED (189 aa). Residues 190–210 traverse the membrane as a helical; Anchor for type IV membrane protein segment; that stretch reads WILFVIGCIVCCIFMYAFYRF. At 211 to 213 the chain is on the vesicular side; that stretch reads WRG.

It belongs to the GOSR2 family. As to quaternary structure, part of a unique SNARE complex.

The protein resides in the golgi apparatus. The protein localises to the cis-Golgi network membrane. It localises to the golgi apparatus membrane. Its subcellular location is the endoplasmic reticulum membrane. Involved in transport of proteins from the cis/medial-Golgi to the trans-Golgi network. The chain is Golgi SNAP receptor complex member 2 homolog memb-1 from Caenorhabditis elegans.